A 1905-amino-acid polypeptide reads, in one-letter code: Low-density lipoprotein receptor-related protein 4 (1905 aa).

A signal peptide spans 1–20 (MRRQWGALLLGALLCAHGLA). At 21–1725 (SSPECACGRS…AAPGEGLHIS (1705 aa)) the chain is on the extracellular side. 8 LDL-receptor class A domains span residues 26 to 67 (ACGR…DGCI), 70 to 106 (TCSPLDFHCDNGKCIRRSWVCDGDNDCEDDSDEQDCP), 109 to 144 (ECEEDEFPCQNGYCIRSLWHCDGDNDCGDNSDEQCD), 147 to 183 (KCSDKEFRCSDGSCIAEHWYCDGDTDCKDGSDEENCP), 190 to 226 (PCNLEEFQCAYGRCILDIYHCDGDDDCGDWSDESDCS), 230 to 266 (PCRSGEFMCDSGLCINAGWRCDGDADCDDQSDERNCT), 269 to 305 (MCTAEQFRCHSGRCVRLSWRCDGEDDCADNSDEENCE), and 311 to 350 (QCALDQFLCWNGRCIGQRKLCNGVNDCGDNSDESPQQNCR). Intrachain disulfides connect Cys27-Cys44, Cys34-Cys57, Cys51-Cys66, Cys71-Cys83, Cys78-Cys96, Cys90-Cys105, Cys110-Cys122, Cys117-Cys135, Cys129-Cys143, Cys148-Cys160, Cys155-Cys173, Cys167-Cys182, Cys191-Cys203, Cys198-Cys216, Cys210-Cys225, Cys231-Cys243, Cys238-Cys256, Cys250-Cys265, Cys270-Cys282, Cys277-Cys295, Cys289-Cys304, Cys312-Cys324, Cys319-Cys337, Cys331-Cys349, Cys358-Cys369, Cys365-Cys378, Cys380-Cys393, Cys399-Cys409, Cys405-Cys418, and Cys420-Cys433. An N-linked (GlcNAc...) asparagine glycan is attached at Asn264. Residues 354-394 (GEENCNVNNGGCAQKCQMVRGAVQCTCHTGYRLTEDGHTCQ) form the EGF-like 1; calcium-binding domain. Residues 395–434 (DVNECAEEGYCSQGCTNSEGAFQCWCETGYELRPDRRSCK) form the EGF-like 2; calcium-binding domain. LDL-receptor class B repeat units lie at residues 480 to 522 (ELVF…DWVH), 523 to 565 (DKLY…HPME), 566 to 609 (GTIY…DYAG), 610 to 652 (RRMY…FEDS), and 653 to 693 (LYWT…LHPQ). Asn498 carries an N-linked (GlcNAc...) asparagine glycan. The 40-residue stretch at 698 to 737 (GKNRCGDNNGGCTHLCLPSGQNYTCACPTGFRKISSHACA) folds into the EGF-like 3 domain. 3 cysteine pairs are disulfide-bonded: Cys702-Cys713, Cys709-Cys722, and Cys724-Cys736. Asn719 carries N-linked (GlcNAc...) asparagine glycosylation. 5 LDL-receptor class B repeats span residues 785–827 (DHVY…DWVT), 828–870 (NKLY…EPMG), 871–914 (GYMY…DYGS), 915–956 (QRLY…LYGE), and 957–998 (RIYW…FHRR). Asn901 carries an N-linked (GlcNAc...) asparagine glycan. Asn1077 is a glycosylation site (N-linked (GlcNAc...) asparagine). 10 LDL-receptor class B repeats span residues 1093–1135 (GKVY…DAIG), 1136–1178 (RKVY…YHEM), 1179–1222 (GFMY…DKAS), 1223–1263 (SQLL…LLDS), 1264–1306 (YIYW…DRAQ), 1397–1439 (GKVY…DWVA), 1440–1482 (RNLY…FPRK), 1483–1526 (GYLF…DYDT), 1527–1568 (RRIY…QDRW), and 1569–1610 (IYWT…SPQR). Residues Asn1415 and Asn1467 are each glycosylated (N-linked (GlcNAc...) asparagine). Residues 1659-1686 (PRATGMSEKSPVLPNTPPTTLYSSTTRT) are disordered. Low complexity predominate over residues 1676–1686 (PTTLYSSTTRT). The chain crosses the membrane as a helical span at residues 1726–1746 (YAIGGLLSILLILVVIAALML). Topologically, residues 1747-1905 (YRHKKSKFTD…ERKLSSESQV (159 aa)) are cytoplasmic. Residues 1766 to 1769 (NPSY) carry the Endocytosis signal motif. A disordered region spans residues 1852–1905 (ASSGSLDDTETEQLLQEEQSECSSVHTAATPERRGSLPDTGWKHERKLSSESQV). The segment covering 1882-1905 (PERRGSLPDTGWKHERKLSSESQV) has biased composition (basic and acidic residues).

It belongs to the LDLR family. In terms of assembly, homooligomer. Interacts with MUSK; the heterodimer forms an AGRIN receptor complex that binds AGRIN resulting in activation of MUSK. Interacts (via the extracellular domain) with SOST; the interaction facilitates the inhibition of Wnt signaling. Interacts with MESD; the interaction promotes glycosylation of LRP4 and its cell-surface expression. In terms of tissue distribution, expressed in bone; present in osteoblasts and osteocytes. No expression is observed in osteoclast. Expressed in several regions of the brain.

Its subcellular location is the cell membrane. In terms of biological role, mediates SOST-dependent inhibition of bone formation. Functions as a specific facilitator of SOST-mediated inhibition of Wnt signaling. Plays a key role in the formation and the maintenance of the neuromuscular junction (NMJ), the synapse between motor neuron and skeletal muscle. Directly binds AGRIN and recruits it to the MUSK signaling complex. Mediates the AGRIN-induced phosphorylation of MUSK, the kinase of the complex. The activation of MUSK in myotubes induces the formation of NMJ by regulating different processes including the transcription of specific genes and the clustering of AChR in the postsynaptic membrane. Alternatively, may be involved in the negative regulation of the canonical Wnt signaling pathway, being able to antagonize the LRP6-mediated activation of this pathway. More generally, has been proposed to function as a cell surface endocytic receptor binding and internalizing extracellular ligands for degradation by lysosomes. May play an essential role in the process of digit differentiation. The polypeptide is Low-density lipoprotein receptor-related protein 4 (LRP4) (Homo sapiens (Human)).